The chain runs to 188 residues: MLVHPEAMSVGALADKIRKIENWPQKGILFHDITPVLQSAEYFRLLVDLLVYRYMDQKIDIVAGLDARGFIIGAALAYQLNVGFVPIRKKGKLPFETVSQSYALEYGEAAVEIHTDAVKLGSRVLLVDDLVATGGTMLAGLELIRKLGGEIVEAAAILEFTDLQGGKNIRASGAPLFTLLQNEGCMKG.

It belongs to the purine/pyrimidine phosphoribosyltransferase family. In terms of assembly, homodimer.

It localises to the cytoplasm. The enzyme catalyses AMP + diphosphate = 5-phospho-alpha-D-ribose 1-diphosphate + adenine. It participates in purine metabolism; AMP biosynthesis via salvage pathway; AMP from adenine: step 1/1. Catalyzes a salvage reaction resulting in the formation of AMP, that is energically less costly than de novo synthesis. This chain is Adenine phosphoribosyltransferase, found in Neisseria meningitidis serogroup A / serotype 4A (strain DSM 15465 / Z2491).